The primary structure comprises 697 residues: Elongation factor G (697 aa).

Residues 10–285 form the tr-type G domain; sequence EKTRNIGIVA…GVNDYLPSPL (276 aa). Residues 19 to 26, 83 to 87, and 137 to 140 contribute to the GTP site; these read AHIDAGKT, DTPGH, and NKMD.

Belongs to the TRAFAC class translation factor GTPase superfamily. Classic translation factor GTPase family. EF-G/EF-2 subfamily.

It localises to the cytoplasm. Catalyzes the GTP-dependent ribosomal translocation step during translation elongation. During this step, the ribosome changes from the pre-translocational (PRE) to the post-translocational (POST) state as the newly formed A-site-bound peptidyl-tRNA and P-site-bound deacylated tRNA move to the P and E sites, respectively. Catalyzes the coordinated movement of the two tRNA molecules, the mRNA and conformational changes in the ribosome. The polypeptide is Elongation factor G (Ligilactobacillus salivarius (strain UCC118) (Lactobacillus salivarius)).